A 211-amino-acid polypeptide reads, in one-letter code: Large ribosomal subunit protein uL3 (211 aa).

The protein belongs to the universal ribosomal protein uL3 family. Part of the 50S ribosomal subunit. Forms a cluster with proteins L14 and L19.

In terms of biological role, one of the primary rRNA binding proteins, it binds directly near the 3'-end of the 23S rRNA, where it nucleates assembly of the 50S subunit. The chain is Large ribosomal subunit protein uL3 from Trichlorobacter lovleyi (strain ATCC BAA-1151 / DSM 17278 / SZ) (Geobacter lovleyi).